Reading from the N-terminus, the 245-residue chain is MIFVQQFEEVRLILEKAKKITVLTGAGASTESGIPDFRSANGLYADANVEMYLSRGYYNRSPKEFWKHYKEIFQINTFHQYKPNRGHRFLAELEEQGKDITILTQNIDGLHQLGDSKHVIDLHGTLQTAHCPKCKTGYDLQYMIDHEVPRCQKCNFILNPDVVLYGDTLPQYQNAIKRLYETDVLIVMGTSLKVQPVASFPQIAKREVGATTILVNEELTGQEYNFDYVFQNKIGEFVEGLSSIK.

A Deacetylase sirtuin-type domain is found at 1–245; sequence MIFVQQFEEV…EFVEGLSSIK (245 aa). The NAD(+) site is built by alanine 26, threonine 30, phenylalanine 37, arginine 38, glutamine 105, isoleucine 107, aspartate 108, and histidine 123. Phenylalanine 37 contacts nicotinamide. Nicotinamide contacts are provided by isoleucine 107 and aspartate 108. The Proton acceptor role is filled by histidine 123. Residues cysteine 131, cysteine 134, cysteine 151, and cysteine 154 each coordinate Zn(2+). The NAD(+) site is built by threonine 190, serine 191, asparagine 216, and isoleucine 234.

It belongs to the sirtuin family. Class U subfamily. Zn(2+) is required as a cofactor.

It localises to the cytoplasm. The catalysed reaction is N(6)-acetyl-L-lysyl-[protein] + NAD(+) + H2O = 2''-O-acetyl-ADP-D-ribose + nicotinamide + L-lysyl-[protein]. Functionally, NAD-dependent protein deacetylase which modulates the activities of several enzymes which are inactive in their acetylated form. This Bacillus thuringiensis subsp. konkukian (strain 97-27) protein is NAD-dependent protein deacetylase.